Consider the following 1148-residue polypeptide: Trafficking protein particle complex subunit 9 (1148 aa).

A phosphoserine mark is found at S566 and S953.

Belongs to the NIBP family. Component of the multisubunit TRAPP (transport protein particle) complex, which includes at least TRAPPC2, TRAPPC2L, TRAPPC3, TRAPPC3L, TRAPPC4, TRAPPC5, TRAPPC8, TRAPPC9, TRAPPC10, TRAPPC11 and TRAPPC12. Directly interacts with IKBKB and MAP3K14. Expressed in neurons of the pyramidal layer of the cortex, in spinal cord motor neurons and white matter neurons (at protein level).

It localises to the golgi apparatus. Its subcellular location is the cis-Golgi network. It is found in the endoplasmic reticulum. The protein resides in the cytoplasm. Functionally, functions as an activator of NF-kappa-B through increased phosphorylation of the IKK complex. May function in neuronal cells differentiation. May play a role in vesicular transport from endoplasmic reticulum to Golgi. The protein is Trafficking protein particle complex subunit 9 (Trappc9) of Mus musculus (Mouse).